We begin with the raw amino-acid sequence, 316 residues long: Ribosomal RNA small subunit methyltransferase H (316 aa).

Residues 35-37 (AGH), Asp-55, Phe-84, Asp-105, and Gln-112 each bind S-adenosyl-L-methionine.

It belongs to the methyltransferase superfamily. RsmH family.

The protein localises to the cytoplasm. The enzyme catalyses cytidine(1402) in 16S rRNA + S-adenosyl-L-methionine = N(4)-methylcytidine(1402) in 16S rRNA + S-adenosyl-L-homocysteine + H(+). Its function is as follows. Specifically methylates the N4 position of cytidine in position 1402 (C1402) of 16S rRNA. The polypeptide is Ribosomal RNA small subunit methyltransferase H (Streptococcus pneumoniae (strain Hungary19A-6)).